The chain runs to 446 residues: ATP-dependent protease ATPase subunit HslU (446 aa).

ATP-binding positions include V18, 60-65 (GVGKTE), D259, E324, and R396.

It belongs to the ClpX chaperone family. HslU subfamily. A double ring-shaped homohexamer of HslV is capped on each side by a ring-shaped HslU homohexamer. The assembly of the HslU/HslV complex is dependent on binding of ATP.

It is found in the cytoplasm. Functionally, ATPase subunit of a proteasome-like degradation complex; this subunit has chaperone activity. The binding of ATP and its subsequent hydrolysis by HslU are essential for unfolding of protein substrates subsequently hydrolyzed by HslV. HslU recognizes the N-terminal part of its protein substrates and unfolds these before they are guided to HslV for hydrolysis. The sequence is that of ATP-dependent protease ATPase subunit HslU from Acidovorax sp. (strain JS42).